A 434-amino-acid chain; its full sequence is UDP-N-acetylmuramate--L-alanine ligase (434 aa).

108-114 (GSHGKTT) lines the ATP pocket.

The protein belongs to the MurCDEF family.

The protein resides in the cytoplasm. The catalysed reaction is UDP-N-acetyl-alpha-D-muramate + L-alanine + ATP = UDP-N-acetyl-alpha-D-muramoyl-L-alanine + ADP + phosphate + H(+). It participates in cell wall biogenesis; peptidoglycan biosynthesis. Cell wall formation. In Geobacillus thermodenitrificans (strain NG80-2), this protein is UDP-N-acetylmuramate--L-alanine ligase.